The chain runs to 820 residues: MAGELADKKDRDASPSKEERKRSRTPDRERDRDRDRKSSPSKDRKRHRSRDRRRGGSRSRSRSRSKSAERERRHKERERDKERDRNKKDRDRDKDGHRRDKDRKRSSLSPGRGKDFKSRKDRDSKKDEEDEHGDKKPKAQPLSLEELLAKKKAEEEAEAKPKFLSKAEREAEALKRRQQEVEERQRMLEEERKKRKQFQDLGRKMLEDPQERERRERRERMERETNGNEDEEGRQKIREEKDKSKELHAIKERYLGGIKKRRRTRHLNDRKFVFEWDASEDTSIDYNPLYKERHQVQLLGRGFIAGIDLKQQKREQSRFYGDLMEKRRTLEEKEQEEARLRKLRKKEAKQRWDDRHWSQKKLDEMTDRDWRIFREDYSITTKGGKIPNPIRSWKDSSLPPHILEVIDKCGYKEPTPIQRQAIPIGLQNRDIIGVAETGSGKTAAFLIPLLVWITTLPKIDRIEESDQGPYAIILAPTRELAQQIEEETIKFGKPLGIRTVAVIGGISREDQGFRLRMGCEIVIATPGRLIDVLENRYLVLSRCTYVVLDEADRMIDMGFEPDVQKILEHMPVSNQKPDTDEAEDPEKMLANFESGKHKYRQTVMFTATMPPAVERLARSYLRRPAVVYIGSAGKPHERVEQKVFLMSESEKRKKLLAILEQGFDPPIIIFVNQKKGCDVLAKSLEKMGYNACTLHGGKGQEQREFALSNLKAGAKDILVATDVAGRGIDIQDVSMVVNYDMAKNIEDYIHRIGRTGRAGKSGVAITFLTKEDSAVFYELKQAILESPVSSCPPELANHPDAQHKPGTILTKKRREETIFA.

The span at 1–42 shows a compositional bias: basic and acidic residues; sequence MAGELADKKDRDASPSKEERKRSRTPDRERDRDRDRKSSPSK. Positions 1 to 244 are disordered; the sequence is MAGELADKKD…QKIREEKDKS (244 aa). 2 positions are modified to phosphoserine: serine 14 and serine 16. Over residues 43–65 the composition is skewed to basic residues; it reads DRKRHRSRDRRRGGSRSRSRSRS. The segment covering 66 to 105 has biased composition (basic and acidic residues); it reads KSAERERRHKERERDKERDRNKKDRDRDKDGHRRDKDRKR. Phosphoserine occurs at positions 107 and 109. Basic and acidic residues-rich tracts occupy residues 112-137, 147-226, and 233-244; these read RGKD…DKKP, LLAK…RETN, and GRQKIREEKDKS. Residues 391 to 419 carry the Q motif motif; that stretch reads RSWKDSSLPPHILEVIDKCGYKEPTPIQR. The Helicase ATP-binding domain occupies 422 to 627; the sequence is IPIGLQNRDI…RSYLRRPAVV (206 aa). 435-442 is a binding site for ATP; the sequence is AETGSGKT. Positions 549–552 match the DEAD box motif; it reads DEAD. Residues 651-799 form the Helicase C-terminal domain; sequence KRKKLLAILE…SCPPELANHP (149 aa). Glycyl lysine isopeptide (Lys-Gly) (interchain with G-Cter in SUMO2) cross-links involve residues lysine 686 and lysine 811.

It belongs to the DEAD box helicase family. DDX23/PRP28 subfamily. As to quaternary structure, the phosphorylated form (by SRPK2) is a component of the U4/U6-U5 tri-snRNP complex composed of the U4, U6 and U5 snRNAs and at least PRPF3, PRPF4, PRPF6, PRPF8, PRPF31, SNRNP200, TXNL4A, WDR57, SNRNP40, DDX23, CD2BP2, PPIH, SNU13, EFTUD2, SART1 and USP39. Identified in the spliceosome C complex. Interacts with ERBB4. Interacts with ERCC6. In terms of processing, in vitro phosphorylated by CLK1 and U1 snRNP-associated protein kinase. Phosphorylated by SRPK2 and this phosphorylation is required for its association with the tri-snRNP (U4/U6-U5 tri-small nuclear ribonucleoproteins) and subsequent spliceosomal B complex formation. May be phosphorylated by SRPK2 on Ser residues in the SR domain; the phosphorylation is required for the removal of inappropriate R-loops during transcription.

The protein resides in the nucleus. It localises to the chromosome. It carries out the reaction ATP + H2O = ADP + phosphate + H(+). Functionally, involved in pre-mRNA splicing and its phosphorylated form (by SRPK2) is required for spliceosomal B complex formation. Independently of its spliceosome formation function, required for the suppression of incorrect R-loops formed during transcription; R-loops are composed of a DNA:RNA hybrid and the associated non-template single-stranded DNA. The sequence is that of Probable ATP-dependent RNA helicase DDX23 from Homo sapiens (Human).